Here is a 230-residue protein sequence, read N- to C-terminus: Thymidylate kinase (230 aa).

20–27 (GGEGAGKS) serves as a coordination point for ATP.

The protein belongs to the thymidylate kinase family.

It carries out the reaction dTMP + ATP = dTDP + ADP. Its function is as follows. Phosphorylation of dTMP to form dTDP in both de novo and salvage pathways of dTTP synthesis. The protein is Thymidylate kinase of Rhodopseudomonas palustris (strain BisB18).